We begin with the raw amino-acid sequence, 484 residues long: 6-phosphogluconate dehydrogenase, decarboxylating (484 aa).

NADP(+) is bound by residues 10–15 (GLAVMG), 33–35 (NRT), 75–77 (IKA), and Asn-103. Substrate-binding positions include Asn-103 and 129-131 (SGG). The active-site Proton acceptor is Lys-183. 186 to 187 (HN) lines the substrate pocket. The active-site Proton donor is the Glu-190. Substrate is bound by residues Tyr-191, Lys-260, Arg-287, Arg-448, and His-454.

This sequence belongs to the 6-phosphogluconate dehydrogenase family. Homodimer.

It carries out the reaction 6-phospho-D-gluconate + NADP(+) = D-ribulose 5-phosphate + CO2 + NADPH. Its pathway is carbohydrate degradation; pentose phosphate pathway; D-ribulose 5-phosphate from D-glucose 6-phosphate (oxidative stage): step 3/3. Functionally, catalyzes the oxidative decarboxylation of 6-phosphogluconate to ribulose 5-phosphate and CO(2), with concomitant reduction of NADP to NADPH. This chain is 6-phosphogluconate dehydrogenase, decarboxylating, found in Caenorhabditis elegans.